The following is a 207-amino-acid chain: 3-demethoxyubiquinol 3-hydroxylase (207 aa).

Fe cation is bound by residues E56, E86, H89, E138, E170, and H173.

Belongs to the COQ7 family. Requires Fe cation as cofactor.

The protein resides in the cell membrane. The catalysed reaction is a 5-methoxy-2-methyl-3-(all-trans-polyprenyl)benzene-1,4-diol + AH2 + O2 = a 3-demethylubiquinol + A + H2O. Its pathway is cofactor biosynthesis; ubiquinone biosynthesis. Functionally, catalyzes the hydroxylation of 2-nonaprenyl-3-methyl-6-methoxy-1,4-benzoquinol during ubiquinone biosynthesis. In Cupriavidus pinatubonensis (strain JMP 134 / LMG 1197) (Cupriavidus necator (strain JMP 134)), this protein is 3-demethoxyubiquinol 3-hydroxylase.